The following is a 248-amino-acid chain: Ribonuclease PH (248 aa).

Residues Arg-86 and Gly-124–Arg-126 contribute to the phosphate site.

The protein belongs to the RNase PH family. Homohexameric ring arranged as a trimer of dimers.

It carries out the reaction tRNA(n+1) + phosphate = tRNA(n) + a ribonucleoside 5'-diphosphate. In terms of biological role, phosphorolytic 3'-5' exoribonuclease that plays an important role in tRNA 3'-end maturation. Removes nucleotide residues following the 3'-CCA terminus of tRNAs; can also add nucleotides to the ends of RNA molecules by using nucleoside diphosphates as substrates, but this may not be physiologically important. Probably plays a role in initiation of 16S rRNA degradation (leading to ribosome degradation) during starvation. This chain is Ribonuclease PH, found in Listeria monocytogenes serotype 4b (strain CLIP80459).